A 150-amino-acid polypeptide reads, in one-letter code: 3-hydroxyacyl-[acyl-carrier-protein] dehydratase FabZ (150 aa).

H54 is an active-site residue.

It belongs to the thioester dehydratase family. FabZ subfamily.

The protein localises to the cytoplasm. The enzyme catalyses a (3R)-hydroxyacyl-[ACP] = a (2E)-enoyl-[ACP] + H2O. In terms of biological role, involved in unsaturated fatty acids biosynthesis. Catalyzes the dehydration of short chain beta-hydroxyacyl-ACPs and long chain saturated and unsaturated beta-hydroxyacyl-ACPs. The chain is 3-hydroxyacyl-[acyl-carrier-protein] dehydratase FabZ from Aliivibrio fischeri (strain ATCC 700601 / ES114) (Vibrio fischeri).